Here is a 452-residue protein sequence, read N- to C-terminus: Dimethyladenosine transferase 2, mitochondrial (452 aa).

S-adenosyl-L-methionine-binding residues include I46, E99, and D125. Positions 408–452 (ANDEPNLEDGVTLPEEDDAEADEIIEEESPVPATTPVKRRRKASS) are disordered. The span at 421–436 (PEEDDAEADEIIEEES) shows a compositional bias: acidic residues.

This sequence belongs to the class I-like SAM-binding methyltransferase superfamily. rRNA adenine N(6)-methyltransferase family. KsgA subfamily.

It localises to the mitochondrion. Its function is as follows. Probable S-adenosyl-L-methionine-dependent methyltransferase which specifically dimethylates mitochondrial 12S rRNA at the conserved stem loop. Also required for basal transcription of mitochondrial DNA. Also regulates mitochondrial DNA copy number. Stimulates transcription independently of the methyltransferase activity. In Drosophila melanogaster (Fruit fly), this protein is Dimethyladenosine transferase 2, mitochondrial (mtTFB2).